The primary structure comprises 382 residues: 1-deoxy-D-xylulose 5-phosphate reductoisomerase (382 aa).

Positions 10, 11, 12, 13, 36, and 122 each coordinate NADPH. K123 provides a ligand contact to 1-deoxy-D-xylulose 5-phosphate. Residue E124 coordinates NADPH. D148 lines the Mn(2+) pocket. S149, E150, S174, and H197 together coordinate 1-deoxy-D-xylulose 5-phosphate. Position 150 (E150) interacts with Mn(2+). G203 provides a ligand contact to NADPH. 1-deoxy-D-xylulose 5-phosphate is bound by residues S210, N215, K216, and E219. A Mn(2+)-binding site is contributed by E219.

This sequence belongs to the DXR family. Mg(2+) serves as cofactor. Requires Mn(2+) as cofactor.

It carries out the reaction 2-C-methyl-D-erythritol 4-phosphate + NADP(+) = 1-deoxy-D-xylulose 5-phosphate + NADPH + H(+). It functions in the pathway isoprenoid biosynthesis; isopentenyl diphosphate biosynthesis via DXP pathway; isopentenyl diphosphate from 1-deoxy-D-xylulose 5-phosphate: step 1/6. In terms of biological role, catalyzes the NADPH-dependent rearrangement and reduction of 1-deoxy-D-xylulose-5-phosphate (DXP) to 2-C-methyl-D-erythritol 4-phosphate (MEP). The chain is 1-deoxy-D-xylulose 5-phosphate reductoisomerase from Chlorobaculum tepidum (strain ATCC 49652 / DSM 12025 / NBRC 103806 / TLS) (Chlorobium tepidum).